The primary structure comprises 440 residues: Chromosomal replication initiator protein DnaA (440 aa).

The interval 1–72 (MTELDSLWEA…KEFAQRELGR (72 aa)) is domain I, interacts with DnaA modulators. Residues 72–103 (RNIEPHYVLEGEFTYTNKKTEDDPTPSFEMDT) are domain II. The domain III, AAA+ region stretch occupies residues 104–320 (PLNPHYNFGT…GALTKVQAFA (217 aa)). ATP is bound by residues G148, G150, K151, and T152. The interval 321-440 (NLSGERITPS…ITKLKAKLRS (120 aa)) is domain IV, binds dsDNA.

Belongs to the DnaA family. In terms of assembly, oligomerizes as a right-handed, spiral filament on DNA at oriC.

It localises to the cytoplasm. Its function is as follows. Plays an essential role in the initiation and regulation of chromosomal replication. ATP-DnaA binds to the origin of replication (oriC) to initiate formation of the DNA replication initiation complex once per cell cycle. Binds the DnaA box (a 9 base pair repeat at the origin) and separates the double-stranded (ds)DNA. Forms a right-handed helical filament on oriC DNA; dsDNA binds to the exterior of the filament while single-stranded (ss)DNA is stabiized in the filament's interior. The ATP-DnaA-oriC complex binds and stabilizes one strand of the AT-rich DNA unwinding element (DUE), permitting loading of DNA polymerase. After initiation quickly degrades to an ADP-DnaA complex that is not apt for DNA replication. Binds acidic phospholipids. The chain is Chromosomal replication initiator protein DnaA from Limosilactobacillus reuteri (strain DSM 20016) (Lactobacillus reuteri).